We begin with the raw amino-acid sequence, 308 residues long: MGLLESVKSINWEHESSPVYQDFRVLPLFAVFFPSIRFLLDRFVFEKLAKYLIYGKHRQDMGDDTTERKKKIRKFKESAWKCVYYLSAEILALSVTYNEPWFMNTKYFWVGPGDQTWPDQQTKLKLKLLYMFVAGFYTYSIFALVFWETRRSDFGVSMGHHIATLILIVLSYVCSFSRVGSVVLALHDASDVFLEVGKMSKYSGAERIASFSFILFVLSWIILRLIYYPFWILWSTSYEVVLELDKDKHPIEGPIYYYMFNTLLYCLLVLHIYWWVLMYRMLVKQIQDRGKLSEDVRSDSEGEDEHED.

6 consecutive transmembrane segments (helical) span residues 25–45, 82–102, 128–148, 154–174, 213–233, and 258–278; these read VLPLFAVFFPSIRFLLDRFVF, CVYYLSAEILALSVTYNEPWF, LLYMFVAGFYTYSIFALVFWE, FGVSMGHHIATLILIVLSYVC, FILFVLSWIILRLIYYPFWIL, and YMFNTLLYCLLVLHIYWWVLM. The 215-residue stretch at 73 to 287 folds into the TLC domain; sequence RKFKESAWKC…MYRMLVKQIQ (215 aa). 2 positions are modified to phosphoserine: serine 298 and serine 300.

In terms of tissue distribution, expressed ubiquitously at low levels. Not observed in pollen.

The protein localises to the endoplasmic reticulum membrane. The enzyme catalyses (4R)-hydroxysphinganine + a fatty acyl-CoA = an N-acyl-(4R)-4-hydroxysphinganine + CoA + H(+). It catalyses the reaction a sphingoid base + tetracosanoyl-CoA = an N-tetracosanoyl-sphingoid base + CoA + H(+). The catalysed reaction is (4R)-hydroxysphinganine + hexadecanoyl-CoA = N-hexadecanoyl-(4R)-hydroxysphinganine + CoA + H(+). It carries out the reaction (4R)-hydroxysphinganine + octadecanoyl-CoA = N-octadecanoyl-(4R)-hydroxysphinganine + CoA + H(+). The enzyme catalyses (4R)-hydroxysphinganine + eicosanoyl-CoA = N-eicosanoyl-(4R)-hydroxysphinganine + CoA + H(+). It catalyses the reaction docosanoyl-CoA + (4R)-hydroxysphinganine = N-docosanoyl-(4R)-hydroxysphinganine + CoA + H(+). The catalysed reaction is hexacosanoyl-CoA + (4R)-hydroxysphinganine = N-hexacosanoyl-(4R)-hydroxysphinganine + CoA + H(+). It carries out the reaction tetracosanoyl-CoA + (4R)-hydroxysphinganine = N-tetracosanoyl-(4R)-hydroxysphinganine + CoA + H(+). The enzyme catalyses tetracosanoyl-CoA + sphing-4-enine = N-tetracosanoyl-sphing-4-enine + CoA + H(+). It catalyses the reaction sphinga-(4E,8Z)-dienine + tetracosanoyl-CoA = N-tetracosanoylsphinga-(4E,8Z)-dienine + CoA + H(+). The catalysed reaction is sphinga-(4E,8E)-dienine + tetracosanoyl-CoA = N-tetracosanoylsphinga-(4E,8E)-dienine + CoA + H(+). It carries out the reaction (4R)-hydroxysphing-(8Z)-enine + tetracosanoyl-CoA = N-tetracosanoyl-(4R)-hydroxysphing-(8Z)-enine + CoA + H(+). The enzyme catalyses (4R)-hydroxysphing-(8E)-enine + tetracosanoyl-CoA = N-tetracosanoyl-(4R)-hydroxysphing-(8E)-enine + CoA + H(+). It participates in sphingolipid metabolism. Its activity is regulated as follows. Inhibited by the mycotoxin fumonisin B(1), a sphingosine analog mycotoxins produced by pathogenic fungi. Repressed by divalent cation such as magnesium Mg(2+), copper Cu(2+), zinc Zn(2+), manganese Mn(2+), calcium Ca(2+) and cobalt Co(2+). Its function is as follows. Essential for plant growth, promotes cell division in root meristems. Catalyzes the biosynthesis of ceramide sphingolipids with C(16) to C(28) fatty acids, structural membrane lipids involved in membrane trafficking (e.g. early endosomes) and cell polarity (e.g. polar auxin transport related proteins); active on a broad substrate spectrum, both regarding chain lengths of fatty acids and the sphingoid base, such as long-chain base (LCB) phytosphingosine (t18:0). Mediates resistance to sphinganine-analog mycotoxins (SAMs, e.g. fumonisin B(1)) by restoring the sphingolipid biosynthesis. Could salvage the transport of GPI-anchored proteins from the endoplasmic reticulum to the Golgi apparatus in ceramides-depleted cells after SAM exposure. Contributes to hypoxic conditions tolerance (e.g. submergences), especially in the dark, by promoting the formation of very-long-chain (VLC) ceramide species (22:1, 24:1 and 26:1) and of VLC unsaturated ceramides, which are modulating CTR1-mediated ethylene signaling leading to endoplasmic reticulum (ER)-to-nucleus translocation of EIN2 and EIN3. The chain is Ceramide synthase 1 LOH3 from Arabidopsis thaliana (Mouse-ear cress).